The chain runs to 467 residues: Asparagine--tRNA ligase (467 aa).

Belongs to the class-II aminoacyl-tRNA synthetase family. In terms of assembly, homodimer.

The protein localises to the cytoplasm. The enzyme catalyses tRNA(Asn) + L-asparagine + ATP = L-asparaginyl-tRNA(Asn) + AMP + diphosphate + H(+). The polypeptide is Asparagine--tRNA ligase (Histophilus somni (strain 2336) (Haemophilus somnus)).